Consider the following 354-residue polypeptide: Tribbles homolog 3 (354 aa).

The segment at 1 to 127 is interaction with DDIT3/CHOP; it reads MRATPLAASA…QHVARPTEVL (127 aa). The segment at 36-61 is disordered; the sequence is RDEPEPGPLPSLLPPSPPPASDLSPA. The span at 41–55 shows a compositional bias: pro residues; that stretch reads PGPLPSLLPPSPPPA. Residues 68 to 315 enclose the Protein kinase domain; sequence LGPYILLERE…ALGILLHPWL (248 aa). Basic and acidic residues predominate over residues 320–333; the sequence is GRVSPPQSDRREMD. Residues 320–354 are disordered; the sequence is GRVSPPQSDRREMDQVVPDGPQLEEAEEGEVGLYG. A compositionally biased stretch (acidic residues) spans 341 to 354; the sequence is QLEEAEEGEVGLYG.

Belongs to the protein kinase superfamily. CAMK Ser/Thr protein kinase family. Tribbles subfamily. In terms of assembly, interacts with AKT1, AKT2, MAP2K1 and MAP2K7. Interacts with ATF4. Interacts with DDIT3/CHOP and inhibits its interaction with EP300/P300. Interacts with APOBEC3C. Interacts (via N-terminus) with APOBEC3A. Interacts with RELA. As to expression, highly expressed in liver. Not detected in heart, brain, spleen, lung, skeletal muscle, kidney or testis.

It is found in the nucleus. Functionally, inactive protein kinase which acts as a regulator of the integrated stress response (ISR), a process for adaptation to various stress. Inhibits the transcriptional activity of DDIT3/CHOP and is involved in DDIT3/CHOP-dependent cell death during ER stress. May play a role in programmed neuronal cell death but does not appear to affect non-neuronal cells. Acts as a negative feedback regulator of the ATF4-dependent transcription during the ISR: while TRIB3 expression is promoted by ATF4, TRIB3 protein interacts with ATF4 and inhibits ATF4 transcription activity. Disrupts insulin signaling by binding directly to Akt kinases and blocking their activation. May bind directly to and mask the 'Thr-308' phosphorylation site in AKT1. Interacts with the NF-kappa-B transactivator p65 RELA and inhibits its phosphorylation and thus its transcriptional activation activity. Interacts with MAPK kinases and regulates activation of MAP kinases. Can inhibit APOBEC3A editing of nuclear DNA. This is Tribbles homolog 3 (Trib3) from Mus musculus (Mouse).